A 332-amino-acid chain; its full sequence is Solute carrier family 25 member 16 (332 aa).

Solcar repeat units lie at residues phenylalanine 34–leucine 120, serine 128–valine 216, and leucine 238–phenylalanine 328. The next 6 helical transmembrane spans lie at leucine 37–leucine 57, glycine 88–alanine 108, leucine 134–valine 154, glycine 191–glycine 211, leucine 244–threonine 264, and glycine 299–phenylalanine 319.

Belongs to the mitochondrial carrier (TC 2.A.29) family.

The protein resides in the mitochondrion inner membrane. May be involved in the transport of coenzyme A in the mitochondrial matrix. Very little is known about the physiological function of this carrier. In Homo sapiens (Human), this protein is Solute carrier family 25 member 16.